Here is a 93-residue protein sequence, read N- to C-terminus: Neurophysin 1 (93 aa).

Cystine bridges form between Cys-10-Cys-54, Cys-13-Cys-27, Cys-21-Cys-44, Cys-28-Cys-34, Cys-61-Cys-74, Cys-68-Cys-86, and Cys-75-Cys-80.

This sequence belongs to the vasopressin/oxytocin family.

The protein localises to the secreted. In terms of biological role, neurophysin 1 specifically binds oxytocin. The chain is Neurophysin 1 from Anser anser anser (Western greylag goose).